Here is a 192-residue protein sequence, read N- to C-terminus: Transmembrane protein 11, mitochondrial (192 aa).

Positions Met-1–Glu-20 are disordered. A run of 2 helical transmembrane segments spans residues Thr-84–Pro-100 and Ile-107–Ile-124.

The protein belongs to the TMEM11 family. In terms of assembly, associates with the mitochondrial contact site and cristae organizing system (MICOS) complex, composed of at least MICOS10/MIC10, CHCHD3/MIC19, CHCHD6/MIC25, APOOL/MIC27, IMMT/MIC60, APOO/MIC23/MIC26 and QIL1/MIC13. This complex was also known under the names MINOS or MitOS complex. The MICOS complex associates with mitochondrial outer membrane proteins SAMM50, MTX1, MTX2 and DNAJC11, mitochondrial inner membrane protein TMEM11 and with HSPA9. Interacts with IMMT/MIC60.

The protein resides in the mitochondrion inner membrane. Functionally, plays a role in mitochondrial morphogenesis. This is Transmembrane protein 11, mitochondrial (TMEM11) from Homo sapiens (Human).